The chain runs to 178 residues: Large ribosomal subunit protein uL6 (178 aa).

This sequence belongs to the universal ribosomal protein uL6 family. Part of the 50S ribosomal subunit.

This protein binds to the 23S rRNA, and is important in its secondary structure. It is located near the subunit interface in the base of the L7/L12 stalk, and near the tRNA binding site of the peptidyltransferase center. The sequence is that of Large ribosomal subunit protein uL6 from Streptococcus agalactiae serotype V (strain ATCC BAA-611 / 2603 V/R).